The primary structure comprises 181 residues: ATP synthase subunit delta (181 aa).

This sequence belongs to the ATPase delta chain family. In terms of assembly, F-type ATPases have 2 components, F(1) - the catalytic core - and F(0) - the membrane proton channel. F(1) has five subunits: alpha(3), beta(3), gamma(1), delta(1), epsilon(1). F(0) has three main subunits: a(1), b(2) and c(10-14). The alpha and beta chains form an alternating ring which encloses part of the gamma chain. F(1) is attached to F(0) by a central stalk formed by the gamma and epsilon chains, while a peripheral stalk is formed by the delta and b chains.

The protein resides in the cell inner membrane. In terms of biological role, f(1)F(0) ATP synthase produces ATP from ADP in the presence of a proton or sodium gradient. F-type ATPases consist of two structural domains, F(1) containing the extramembraneous catalytic core and F(0) containing the membrane proton channel, linked together by a central stalk and a peripheral stalk. During catalysis, ATP synthesis in the catalytic domain of F(1) is coupled via a rotary mechanism of the central stalk subunits to proton translocation. Functionally, this protein is part of the stalk that links CF(0) to CF(1). It either transmits conformational changes from CF(0) to CF(1) or is implicated in proton conduction. In Chlorobaculum tepidum (strain ATCC 49652 / DSM 12025 / NBRC 103806 / TLS) (Chlorobium tepidum), this protein is ATP synthase subunit delta.